The chain runs to 388 residues: tRNA(Ile)-lysidine synthase (388 aa).

51–56 (SGGRDS) contacts ATP.

The protein belongs to the tRNA(Ile)-lysidine synthase family.

Its subcellular location is the cytoplasm. It catalyses the reaction cytidine(34) in tRNA(Ile2) + L-lysine + ATP = lysidine(34) in tRNA(Ile2) + AMP + diphosphate + H(+). Ligates lysine onto the cytidine present at position 34 of the AUA codon-specific tRNA(Ile) that contains the anticodon CAU, in an ATP-dependent manner. Cytidine is converted to lysidine, thus changing the amino acid specificity of the tRNA from methionine to isoleucine. The polypeptide is tRNA(Ile)-lysidine synthase (Bifidobacterium longum (strain DJO10A)).